Here is an 815-residue protein sequence, read N- to C-terminus: Minichromosome loss protein 1 (815 aa).

5 WD repeats span residues 11–50, 53–90, 93–132, 135–174, and 228–267; these read AHTD…EPDS, NHQD…EHTL, RTTL…QIFS, PAKA…LIKF, and ENHS…VVVE. Positions 306–362 are disordered; it reads LKEENDPTKPLTSSKSKNRTSKELDDLFGSDDEQSQNVNDLDGNSANEENEFINHDG. Residues 340-352 show a composition bias toward polar residues; sequence SQNVNDLDGNSAN. One copy of the WD 6 repeat lies at 517–553; that stretch reads ENESPVTISLSSSVVLVCTSAGYVRVFSRQGFPISIH.

As to quaternary structure, interacts with pof3 and pol1.

It is found in the nucleus. Its subcellular location is the chromosome. Functionally, has a role in regulating DNA replication complexes. Acts as a regulator of post DNA replication initiation. Associates with chromatin during G1 and S phases of mitosis. Required for the transcriptional repression of the outer repeats of the centromeric region. Acts as a polymerase alpha replication accessory factor and is important for S-phase DNA damage survival. Plays a role in lagging-strand synthesis and Ozaki fragment processing, in addition to DNA repair. This Schizosaccharomyces pombe (strain 972 / ATCC 24843) (Fission yeast) protein is Minichromosome loss protein 1 (mcl1).